A 153-amino-acid polypeptide reads, in one-letter code: NADH dehydrogenase [ubiquinone] 1 beta subcomplex subunit 11, mitochondrial (153 aa).

A mitochondrion-targeting transit peptide spans 1-29 (MAAGLFGLSARRLLAAAATRGLPAARVRW). Residues 40–76 (PSAVAGKRPPEPTTPWQEDPEPEDENLYEKNPDSHGY) form a disordered region. Basic and acidic residues predominate over residues 66 to 76 (LYEKNPDSHGY). A helical transmembrane segment spans residues 89 to 109 (LVFFFGVSIILVLGSTFVAYL).

This sequence belongs to the complex I NDUFB11 subunit family. Complex I is composed of 45 different subunits. Interacts with BCAP31. In terms of tissue distribution, ubiquitous.

It localises to the mitochondrion inner membrane. Functionally, accessory subunit of the mitochondrial membrane respiratory chain NADH dehydrogenase (Complex I), that is believed not to be involved in catalysis. Complex I functions in the transfer of electrons from NADH to the respiratory chain. The immediate electron acceptor for the enzyme is believed to be ubiquinone. The sequence is that of NADH dehydrogenase [ubiquinone] 1 beta subcomplex subunit 11, mitochondrial (NDUFB11) from Homo sapiens (Human).